Reading from the N-terminus, the 468-residue chain is Putative chitinase 1 (468 aa).

An N-terminal signal peptide occupies residues 1 to 21 (MDFYSSLLPFLILIYLEFCSG). A GH18 domain is found at 22–381 (FNRVCYYNGW…MSIIHGLGEY (360 aa)). Cys26 and Cys51 form a disulfide bridge. Chitin is bound by residues 73-74 (VF) and 100-103 (GGWD). Catalysis depends on Glu143, which acts as the Proton donor. Chitin contacts are provided by residues Tyr144, 213 to 216 (KMYD), and Trp353. Positions 386–440 (SDTLEAEREMINKKIRKAAREISYYSDKGNSTMAKKMEDKLNQLKDHLSAVQAHQ) form a coiled coil.

It belongs to the glycosyl hydrolase 18 family. In terms of tissue distribution, prismatic layer of shell (at protein level). Expressed primarily in the mantle with highest level in the outer epithelium of the mantle edge and lower level in the mantle pallium.

The protein localises to the secreted. The enzyme catalyses Random endo-hydrolysis of N-acetyl-beta-D-glucosaminide (1-&gt;4)-beta-linkages in chitin and chitodextrins.. This is Putative chitinase 1 from Margaritifera margaritifera (Freshwater pearl mussel).